The primary structure comprises 360 residues: Geranylgeranyl pyrophosphate synthase 9, chloroplastic (360 aa).

The transit peptide at 1–39 (MATTVHLSSSSLFSQSRGRRDNSISSVKSLRKRTVLSLS) directs the protein to the chloroplast. Isopentenyl diphosphate-binding residues include lysine 106, arginine 109, and histidine 138. Positions 145 and 151 each coordinate Mg(2+). Residue arginine 156 coordinates dimethylallyl diphosphate. Position 157 (arginine 157) interacts with isopentenyl diphosphate. The dimethylallyl diphosphate site is built by lysine 245, threonine 246, glutamine 283, lysine 300, and lysine 310.

This sequence belongs to the FPP/GGPP synthase family. In terms of assembly, monomer. No interactions with GGR. The cofactor is Mg(2+).

Its subcellular location is the plastid. The protein localises to the chloroplast. It catalyses the reaction isopentenyl diphosphate + dimethylallyl diphosphate = (2E)-geranyl diphosphate + diphosphate. The enzyme catalyses isopentenyl diphosphate + (2E)-geranyl diphosphate = (2E,6E)-farnesyl diphosphate + diphosphate. It carries out the reaction isopentenyl diphosphate + (2E,6E)-farnesyl diphosphate = (2E,6E,10E)-geranylgeranyl diphosphate + diphosphate. The protein operates within isoprenoid biosynthesis; farnesyl diphosphate biosynthesis; farnesyl diphosphate from geranyl diphosphate and isopentenyl diphosphate: step 1/1. Its pathway is isoprenoid biosynthesis; geranyl diphosphate biosynthesis; geranyl diphosphate from dimethylallyl diphosphate and isopentenyl diphosphate: step 1/1. It functions in the pathway isoprenoid biosynthesis; geranylgeranyl diphosphate biosynthesis; geranylgeranyl diphosphate from farnesyl diphosphate and isopentenyl diphosphate: step 1/1. Functionally, catalyzes the trans-addition of the three molecules of IPP onto DMAPP to form geranylgeranyl pyrophosphate. In Arabidopsis thaliana (Mouse-ear cress), this protein is Geranylgeranyl pyrophosphate synthase 9, chloroplastic (GGPPS9).